Consider the following 185-residue polypeptide: Protein TIFY 5 (185 aa).

The region spanning 38-72 is the Tify domain; sequence AAEARRNLTIFYNGRMCAVNVTELQARTIISMASQ. Residues 77-185 form a disordered region; sequence KQQQQQIQGR…RAAAPLYARR (109 aa). Over residues 137 to 157 the composition is skewed to low complexity; the sequence is PRAGLQAAAAAAPTMNQPPAA. A Jas motif is present at residues 155-182; that stretch reads PAASGLSMKRSLQRFLEKRKTRAAAPLY. Positions 162 to 169 match the Nuclear localization signal motif; it reads MKRSLQRF.

Belongs to the TIFY/JAZ family. Ubiquitinated. Targeted for degradation by the SCF(COI1) E3 ubiquitin ligase-proteasome pathway during jasmonate signaling.

Its subcellular location is the nucleus. Its function is as follows. Repressor of jasmonate responses. In Oryza sativa subsp. indica (Rice), this protein is Protein TIFY 5.